We begin with the raw amino-acid sequence, 136 residues long: MTRFQVSLVSPESLLFSGQVDQVDLPGIEGDLGVLAGHAPIVVMLRPGIVTTVAGDIRDRFVILGGLAEFSQGELTILADSASSVDGFDLTRLKAQIDEMQESLAKQSVGDELDRAVAKFDHFKAIHTALAPATAF.

This sequence belongs to the ATPase epsilon chain family. F-type ATPases have 2 components, CF(1) - the catalytic core - and CF(0) - the membrane proton channel. CF(1) has five subunits: alpha(3), beta(3), gamma(1), delta(1), epsilon(1). CF(0) has three main subunits: a, b and c.

It is found in the cell inner membrane. Functionally, produces ATP from ADP in the presence of a proton gradient across the membrane. This is ATP synthase epsilon chain 2 from Nitrobacter hamburgensis (strain DSM 10229 / NCIMB 13809 / X14).